The sequence spans 327 residues: Malate dehydrogenase (327 aa).

11 to 17 (GAAGQIS) contacts NAD(+). Substrate contacts are provided by Arg92 and Arg98. NAD(+) contacts are provided by residues Asn105, Gln112, and 129 to 131 (VGN). Asn131 and Arg162 together coordinate substrate. His187 (proton acceptor) is an active-site residue.

Belongs to the LDH/MDH superfamily. MDH type 2 family.

The enzyme catalyses (S)-malate + NAD(+) = oxaloacetate + NADH + H(+). In terms of biological role, catalyzes the reversible oxidation of malate to oxaloacetate. The chain is Malate dehydrogenase from Saccharophagus degradans (strain 2-40 / ATCC 43961 / DSM 17024).